Consider the following 260-residue polypeptide: Proteasome subunit alpha type-1 (260 aa).

Residues 240–260 (PRTTGGAAAAAAPGGAEPMQM) form a disordered region. The segment covering 244–260 (GGAAAAAAPGGAEPMQM) has biased composition (low complexity).

This sequence belongs to the peptidase T1A family. As to quaternary structure, the 26S proteasome consists of a 20S proteasome core and two 19S regulatory subunits. The 20S proteasome core is composed of 28 subunits that are arranged in four stacked rings, resulting in a barrel-shaped structure. The two end rings are each formed by seven alpha subunits, and the two central rings are each formed by seven beta subunits. The catalytic chamber with the active sites is on the inside of the barrel.

Its subcellular location is the cytoplasm. It is found in the nucleus. The proteasome is a multicatalytic proteinase complex which is characterized by its ability to cleave peptides with Arg, Phe, Tyr, Leu, and Glu adjacent to the leaving group at neutral or slightly basic pH. The proteasome has an ATP-dependent proteolytic activity. This is Proteasome subunit alpha type-1 (pas-6) from Caenorhabditis elegans.